The following is a 405-amino-acid chain: Diaminopimelate decarboxylase (405 aa).

Lys46 carries the N6-(pyridoxal phosphate)lysine modification. Residues Gly225 and 259–262 (EPGR) each bind pyridoxal 5'-phosphate. Substrate is bound by residues Arg262, Arg298, and Tyr302. Cys329 serves as the catalytic Proton donor. Substrate-binding residues include Glu330 and Tyr358. Tyr358 contributes to the pyridoxal 5'-phosphate binding site.

Belongs to the Orn/Lys/Arg decarboxylase class-II family. LysA subfamily. Homodimer. Pyridoxal 5'-phosphate serves as cofactor.

It catalyses the reaction meso-2,6-diaminopimelate + H(+) = L-lysine + CO2. The protein operates within amino-acid biosynthesis; L-lysine biosynthesis via DAP pathway; L-lysine from DL-2,6-diaminopimelate: step 1/1. Its function is as follows. Specifically catalyzes the decarboxylation of meso-diaminopimelate (meso-DAP) to L-lysine. The sequence is that of Diaminopimelate decarboxylase from Helicobacter pylori (strain ATCC 700392 / 26695) (Campylobacter pylori).